A 420-amino-acid polypeptide reads, in one-letter code: Gamma-glutamyl phosphate reductase (420 aa).

The protein belongs to the gamma-glutamyl phosphate reductase family.

Its subcellular location is the cytoplasm. It catalyses the reaction L-glutamate 5-semialdehyde + phosphate + NADP(+) = L-glutamyl 5-phosphate + NADPH + H(+). It participates in amino-acid biosynthesis; L-proline biosynthesis; L-glutamate 5-semialdehyde from L-glutamate: step 2/2. Functionally, catalyzes the NADPH-dependent reduction of L-glutamate 5-phosphate into L-glutamate 5-semialdehyde and phosphate. The product spontaneously undergoes cyclization to form 1-pyrroline-5-carboxylate. The protein is Gamma-glutamyl phosphate reductase of Cereibacter sphaeroides (strain ATCC 17029 / ATH 2.4.9) (Rhodobacter sphaeroides).